The primary structure comprises 165 residues: Chorismate pyruvate-lyase (165 aa).

Substrate-binding residues include M35, R77, L115, and E156.

It belongs to the UbiC family. In terms of assembly, monomer.

The protein resides in the cytoplasm. It catalyses the reaction chorismate = 4-hydroxybenzoate + pyruvate. It functions in the pathway cofactor biosynthesis; ubiquinone biosynthesis. Functionally, removes the pyruvyl group from chorismate, with concomitant aromatization of the ring, to provide 4-hydroxybenzoate (4HB) for the ubiquinone pathway. The polypeptide is Chorismate pyruvate-lyase (Salmonella schwarzengrund (strain CVM19633)).